Reading from the N-terminus, the 294-residue chain is ATP synthase gamma chain (294 aa).

The protein belongs to the ATPase gamma chain family. As to quaternary structure, F-type ATPases have 2 components, CF(1) - the catalytic core - and CF(0) - the membrane proton channel. CF(1) has five subunits: alpha(3), beta(3), gamma(1), delta(1), epsilon(1). CF(0) has three main subunits: a, b and c.

The protein resides in the cell inner membrane. Its function is as follows. Produces ATP from ADP in the presence of a proton gradient across the membrane. The gamma chain is believed to be important in regulating ATPase activity and the flow of protons through the CF(0) complex. This chain is ATP synthase gamma chain, found in Paramagnetospirillum magneticum (strain ATCC 700264 / AMB-1) (Magnetospirillum magneticum).